The chain runs to 476 residues: tRNA-2-methylthio-N(6)-dimethylallyladenosine synthase (476 aa).

Residues 1–14 (MTEVVHLHMPEEAR) are compositionally biased toward basic and acidic residues. Residues 1–20 (MTEVVHLHMPEEARATQSRD) are disordered. Residues 26–147 (RRYYVWTVGC…APNPIYQLEE (122 aa)) form the MTTase N-terminal domain. Positions 35, 71, 105, 170, 174, and 177 each coordinate [4Fe-4S] cluster. Residues 156-390 (DHPPVSVHVP…ERLQEQIAAE (235 aa)) form the Radical SAM core domain. The 61-residue stretch at 393–453 (ARFLHQTVEV…PWSLQGVLAR (61 aa)) folds into the TRAM domain.

It belongs to the methylthiotransferase family. MiaB subfamily. As to quaternary structure, monomer. The cofactor is [4Fe-4S] cluster.

The protein resides in the cytoplasm. The enzyme catalyses N(6)-dimethylallyladenosine(37) in tRNA + (sulfur carrier)-SH + AH2 + 2 S-adenosyl-L-methionine = 2-methylsulfanyl-N(6)-dimethylallyladenosine(37) in tRNA + (sulfur carrier)-H + 5'-deoxyadenosine + L-methionine + A + S-adenosyl-L-homocysteine + 2 H(+). In terms of biological role, catalyzes the methylthiolation of N6-(dimethylallyl)adenosine (i(6)A), leading to the formation of 2-methylthio-N6-(dimethylallyl)adenosine (ms(2)i(6)A) at position 37 in tRNAs that read codons beginning with uridine. The polypeptide is tRNA-2-methylthio-N(6)-dimethylallyladenosine synthase (Roseiflexus sp. (strain RS-1)).